We begin with the raw amino-acid sequence, 2136 residues long: Methylcytosine dioxygenase TET1 (2136 aa).

2 stretches are compositionally biased toward basic residues: residues Met1 to Leu12 and Lys20 to Thr31. Residues Met1–Gly47 are disordered. Polar residues predominate over residues Lys32–Thr43. The sufficient for binding to genomic CpG islands stretch occupies residues Leu528–Tyr674. The CXXC-type zinc-finger motif lies at Glu584–Glu625. Cys591, Cys594, Cys597, Cys603, Cys606, Cys609, Cys619, and Cys624 together coordinate Zn(2+). 3 stretches are compositionally biased toward basic and acidic residues: residues Gln712 to Gly724, Glu732 to Lys743, and Ile849 to Asp869. 4 disordered regions span residues Gln712–Thr746, Ile849–Ser876, Gln899–Thr923, and Glu1119–Gln1169. Position 871 is a phosphoserine (Ser871). Residues Ser901–Ser911 are compositionally biased toward low complexity. Polar residues predominate over residues Glu1119–Leu1139. Residues Thr1146 to Pro1163 are compositionally biased toward basic residues. Residues Cys1422, Cys1424, Cys1482, His1508, and Cys1510 each coordinate Zn(2+). Residue Arg1551 participates in 2-oxoglutarate binding. The Zn(2+) site is built by Cys1561, Cys1563, Cys1579, and Cys1588. An interaction with DNA region spans residues Ser1580 to Ser1593. A Glycyl lysine isopeptide (Lys-Gly) (interchain with G-Cter in ubiquitin) cross-link involves residue Lys1589. Cys1648 is a binding site for Zn(2+). Cys1664 is a 2-oxoglutarate binding site. Position 1670 (His1670) interacts with Zn(2+). His1672 and Asp1674 together coordinate Fe cation. Substrate is bound at residue Asn1677. His1706 is a 2-oxoglutarate binding site. Disordered stretches follow at residues Glu1774–Asp1897 and Glu1919–Glu1984. Residues Asn1786–Thr1800 show a composition bias toward low complexity. Polar residues-rich tracts occupy residues Ser1824 to Leu1833 and His1937 to Ala1953. The span at Met1957–Ser1976 shows a compositional bias: acidic residues. His2028 contributes to the Fe cation binding site. Arg2043–Ser2045 serves as a coordination point for 2-oxoglutarate. Tyr2049–His2051 is a substrate binding site. His2059 serves as a coordination point for Zn(2+). The segment covering Lys2074–Ala2087 has biased composition (basic and acidic residues). The disordered stretch occupies residues Lys2074–Glu2100.

Belongs to the TET family. In terms of assembly, interacts with SIN3A; recruits the transcriptional corepressor SIN3A to gene promoters. Interacts with HCFC1. Interacts (via C-terminus) with OGT. Found in a complex composed of at least SINHCAF, SIN3A, HDAC1, SAP30, RBBP4, OGT and TET1. Interacts with QSER1. Interacts with NONO (via DNA-binding domain); this interaction recruits TET1 to genomic loci. Interacts with FOXA2; this interaction may recruit TET1 to specific enhancers to preserve their unmethylated status and hence allowing gene expression. Interacts with RNF2. Directly interacts (via C-terminus) with the DCAF1 component of the CRL4(VprBP) E3 ubiquitin-protein ligase complex. Interacts with UHRF1; this interaction induces the recruitment of TET1 to replicating heterochromatin. Interacts with DCAF1. Fe(2+) is required as a cofactor. Requires Zn(2+) as cofactor. Post-translationally, glycosylated. Interaction with OGT leads to GlcNAcylation. Monoubiquitinated at Lys-1589 by the DCX (DDB1-CUL4-X-box) E3 ubiquitin-protein ligase complex called CRL4(VprBP) or CUL4A-RBX1-DDB1-DCAF1/VPRBP complex; this modification promotes binding to DNA. As to expression, expressed in fetal heart, lung and brain, and in adult skeletal muscle, thymus and ovary. Not detected in adult heart, lung or brain. Up-regulated in glioblastoma cells (at protein level). Expressed in embryonic stem cells (at protein level).

It is found in the nucleus. The protein resides in the chromosome. It catalyses the reaction a 5-methyl-2'-deoxycytidine in DNA + 2-oxoglutarate + O2 = a 5-hydroxymethyl-2'-deoxycytidine in DNA + succinate + CO2. The enzyme catalyses a 5-hydroxymethyl-2'-deoxycytidine in DNA + 2-oxoglutarate + O2 = a 5-formyl-2'-deoxycytidine in DNA + succinate + CO2 + H2O. It carries out the reaction a 5-formyl-2'-deoxycytidine in DNA + 2-oxoglutarate + O2 = a 5-carboxyl-2'-deoxycytidine in DNA + succinate + CO2 + H(+). Dioxygenase that plays a key role in active DNA demethylation, by catalyzing the sequential oxidation of the modified genomic base 5-methylcytosine (5mC) into 5-hydroxymethylcytosine (5hmC), 5-formylcytosine (5fC), and 5-carboxylcytosine (5caC). In addition to its role in DNA demethylation, plays a more general role in chromatin regulation by recruiting histone modifying protein complexes to alter histone marks and chromatin accessibility, leading to both activation and repression of gene expression. Plays therefore a role in many biological processes, including stem cell maintenance, T- and B-cell development, inflammation regulation, genomic imprinting, neural activity or DNA repair. Involved in the balance between pluripotency and lineage commitment of cells and plays a role in embryonic stem cells maintenance and inner cell mass cell specification. Together with QSER1, plays an essential role in the protection and maintenance of transcriptional and developmental programs to inhibit the binding of DNMT3A/3B and therefore de novo methylation. May play a role in pancreatic beta-cell specification during development. In this context, may function as an upstream epigenetic regulator of PAX4 presumably through direct recruitment by FOXA2 to a PAX4 enhancer to preserve its unmethylated status, thereby potentiating PAX4 expression to adopt beta-cell fate during endocrine lineage commitment. Under DNA hypomethylation conditions, such as in female meiotic germ cells, may induce epigenetic reprogramming of pericentromeric heterochromatin (PCH), the constitutive heterochromatin of pericentromeric regions. PCH forms chromocenters in the interphase nucleus and chromocenters cluster at the prophase of meiosis. In this context, may also be essential for chromocenter clustering in a catalytic activity-independent manner, possibly through the recruitment polycomb repressive complex 1 (PRC1) to the chromocenters. During embryonic development, may be required for normal meiotic progression in oocytes and meiotic gene activation. Binds preferentially to DNA containing cytidine-phosphate-guanosine (CpG) dinucleotides over CpH (H=A, T, and C), hemimethylated-CpG and hemimethylated-hydroxymethyl-CpG. Its function is as follows. Dioxygenase that plays a key role in active DNA demethylation. Binds to promoters, particularly to those with high CG content. In hippocampal neurons, isoform 1 regulates the expression of a unique subset of genes compared to isoform 2, although some overlap exists between both isoforms, hence differentially regulates excitatory synaptic transmission. In hippocampal neuron cell cultures, isoform 1 controls both miniature excitatory postsynaptic current amplitude and frequency. Isoform 1 may regulate genes involved in hippocampal-dependent memory, leading to positive regulation of memory, contrary to isoform 2 that may decrease memory. In terms of biological role, dioxygenase that plays a key role in active DNA demethylation. As isoform 1, binds to promoters, particularly to those with high CG content, however displays reduced global chromatin affinity compared with isoform 1, leading to decreased global DNA demethylation compared with isoform 1. Contrary to isoform 1, isoform 2 localizes during S phase to sites of ongoing DNA replication in heterochromatin, causing a significant de novo 5hmC formation, globally, and more so in heterochromatin, including LINE 1 interspersed DNA repeats leading to their activation. In hippocampal neurons, isoform 2 regulates the expression of a unique subset of genes compared to isoform 1, although some overlap between both isoforms, hence differentially regulates excitatory synaptic transmission. In hippocampal neuron cell cultures, isoform 2 controls miniature excitatory postsynaptic current frequency, but not amplitude. Isoform 2 may regulate genes involved in hippocampal-dependent memory, leading to negative regulation of memory, contrary to isoform 1 that may improve memory. In immature and partially differentiated gonadotrope cells, directly represses luteinizing hormone gene LHB expression and does not catalyze 5hmC at the gene promoter. The protein is Methylcytosine dioxygenase TET1 of Homo sapiens (Human).